A 65-amino-acid polypeptide reads, in one-letter code: Putative potassium channel toxin Ts21 (65 aa).

Residues 1–25 (MNKVYLVAILVLSVLLVANVSPIEG) form the signal peptide. Intrachain disulfides connect cysteine 31-cysteine 53, cysteine 38-cysteine 61, and cysteine 42-cysteine 63.

This sequence belongs to the short scorpion toxin superfamily. Potassium channel inhibitor family. Alpha-KTx 11 subfamily. As to expression, expressed by the venom gland.

It localises to the secreted. This recombinant toxin inhibits the mammalian voltage-gated potassium channels Kv1.3/KCNA3 in vitro with an IC(50) of 26.40 nM. In Tityus serrulatus (Brazilian scorpion), this protein is Putative potassium channel toxin Ts21.